The sequence spans 249 residues: Proteasome subunit alpha type-3 (249 aa).

This sequence belongs to the peptidase T1A family. The 26S proteasome consists of a 20S proteasome core and two 19S regulatory subunits. The 20S proteasome core is composed of 28 subunits that are arranged in four stacked rings, resulting in a barrel-shaped structure. The two end rings are each formed by seven alpha subunits, and the two central rings are each formed by seven beta subunits. The catalytic chamber with the active sites is on the inside of the barrel.

It localises to the cytoplasm. Its subcellular location is the nucleus. In terms of biological role, the proteasome is a multicatalytic proteinase complex which is characterized by its ability to cleave peptides with Arg, Phe, Tyr, Leu, and Glu adjacent to the leaving group at neutral or slightly basic pH. The proteasome has an ATP-dependent proteolytic activity. In Oryza sativa subsp. japonica (Rice), this protein is Proteasome subunit alpha type-3 (PAG1).